Reading from the N-terminus, the 356-residue chain is Holliday junction branch migration complex subunit RuvB (356 aa).

A large ATPase domain (RuvB-L) region spans residues 4–190; the sequence is TDKLAAERII…FGIVARLEFY (187 aa). ATP is bound by residues Leu-29, Arg-30, Gly-71, Lys-74, Thr-75, Thr-76, 137–139, Arg-180, Tyr-190, and Arg-227; that span reads EDY. Thr-75 contacts Mg(2+). A small ATPAse domain (RuvB-S) region spans residues 191 to 261; it reads DAEQLSRIVR…VADAALAMLD (71 aa). A head domain (RuvB-H) region spans residues 264 to 356; sequence PVGFDLMDRK…NLWDTPDAEC (93 aa). Positions 300, 319, and 324 each coordinate DNA.

It belongs to the RuvB family. In terms of assembly, homohexamer. Forms an RuvA(8)-RuvB(12)-Holliday junction (HJ) complex. HJ DNA is sandwiched between 2 RuvA tetramers; dsDNA enters through RuvA and exits via RuvB. An RuvB hexamer assembles on each DNA strand where it exits the tetramer. Each RuvB hexamer is contacted by two RuvA subunits (via domain III) on 2 adjacent RuvB subunits; this complex drives branch migration. In the full resolvosome a probable DNA-RuvA(4)-RuvB(12)-RuvC(2) complex forms which resolves the HJ.

It localises to the cytoplasm. It catalyses the reaction ATP + H2O = ADP + phosphate + H(+). The RuvA-RuvB-RuvC complex processes Holliday junction (HJ) DNA during genetic recombination and DNA repair, while the RuvA-RuvB complex plays an important role in the rescue of blocked DNA replication forks via replication fork reversal (RFR). RuvA specifically binds to HJ cruciform DNA, conferring on it an open structure. The RuvB hexamer acts as an ATP-dependent pump, pulling dsDNA into and through the RuvAB complex. RuvB forms 2 homohexamers on either side of HJ DNA bound by 1 or 2 RuvA tetramers; 4 subunits per hexamer contact DNA at a time. Coordinated motions by a converter formed by DNA-disengaged RuvB subunits stimulates ATP hydrolysis and nucleotide exchange. Immobilization of the converter enables RuvB to convert the ATP-contained energy into a lever motion, pulling 2 nucleotides of DNA out of the RuvA tetramer per ATP hydrolyzed, thus driving DNA branch migration. The RuvB motors rotate together with the DNA substrate, which together with the progressing nucleotide cycle form the mechanistic basis for DNA recombination by continuous HJ branch migration. Branch migration allows RuvC to scan DNA until it finds its consensus sequence, where it cleaves and resolves cruciform DNA. This Burkholderia pseudomallei (strain 668) protein is Holliday junction branch migration complex subunit RuvB.